A 358-amino-acid polypeptide reads, in one-letter code: Alanine racemase (358 aa).

The active-site Proton acceptor; specific for D-alanine is the K35. Residue K35 is modified to N6-(pyridoxal phosphate)lysine. R130 contributes to the substrate binding site. Y255 serves as the catalytic Proton acceptor; specific for L-alanine. M303 contributes to the substrate binding site.

This sequence belongs to the alanine racemase family. Pyridoxal 5'-phosphate is required as a cofactor.

The enzyme catalyses L-alanine = D-alanine. The protein operates within amino-acid biosynthesis; D-alanine biosynthesis; D-alanine from L-alanine: step 1/1. Catalyzes the interconversion of L-alanine and D-alanine. May also act on other amino acids. The polypeptide is Alanine racemase (alr) (Shewanella baltica (strain OS155 / ATCC BAA-1091)).